Reading from the N-terminus, the 327-residue chain is Aldo/keto reductase slr0942 (327 aa).

Residue G18–G27 coordinates NADP(+). Catalysis depends on Y57, which acts as the Proton donor. H119 provides a ligand contact to substrate. Residue S216–N280 participates in NADP(+) binding.

This sequence belongs to the aldo/keto reductase family. As to quaternary structure, monomer.

The enzyme catalyses a secondary alcohol + NADP(+) = a ketone + NADPH + H(+). With respect to regulation, curcumin non-competitively inhibits the enzyme with respect to furfural. To a lesser extent, enzyme activity is also inhibited by indomethacin, coumarate, coumarin, and alrestatin. Its function is as follows. Aldo/keto reductase with broad substrate spectrum. Catalyzes the NADPH-dependent reduction of aldehyde- and ketone-groups of different classes of carbonyl compounds to the corresponding alcohols. Highest enzymatic efficiency is observed with 4-oxonon-2-enal (4-ONE) and 4-hydroxynon-2-enal (4-HNE), that are lipid peroxidation products, and 9,10-phenanthrenequinone (9,10-PQ), a photoproduct of phenanthrene that is one of the most prevalent polycyclic aromatic hydrocarbons in the environment. Is also active on sugar-derived reactive carbonyls such as methylglyoxal (MG), glyoxal and 3-deoxyglucosone (3-DG), and on other lipid-derived carbonyls such as acrolein. May be involved in the detoxification of the toxic lipid peroxidation products 4-ONE and 4-HNE besides many other exo- and endogenic reactive carbonyl compounds (RCs) that may lead to photoinhibition or other cell damages. The polypeptide is Aldo/keto reductase slr0942 (Synechocystis sp. (strain ATCC 27184 / PCC 6803 / Kazusa)).